Reading from the N-terminus, the 169-residue chain is 6,7-dimethyl-8-ribityllumazine synthase (169 aa).

5-amino-6-(D-ribitylamino)uracil contacts are provided by residues Trp27, 61–63 (SYE), and 90–92 (VLI). 95-96 (ST) serves as a coordination point for (2S)-2-hydroxy-3-oxobutyl phosphate. His98 (proton donor) is an active-site residue. Phe123 is a 5-amino-6-(D-ribitylamino)uracil binding site. Arg137 serves as a coordination point for (2S)-2-hydroxy-3-oxobutyl phosphate.

This sequence belongs to the DMRL synthase family. In terms of assembly, homopentamer.

It is found in the mitochondrion intermembrane space. The catalysed reaction is (2S)-2-hydroxy-3-oxobutyl phosphate + 5-amino-6-(D-ribitylamino)uracil = 6,7-dimethyl-8-(1-D-ribityl)lumazine + phosphate + 2 H2O + H(+). Its pathway is cofactor biosynthesis; riboflavin biosynthesis; riboflavin from 2-hydroxy-3-oxobutyl phosphate and 5-amino-6-(D-ribitylamino)uracil: step 1/2. Catalyzes the formation of 6,7-dimethyl-8-ribityllumazine by condensation of 5-amino-6-(D-ribitylamino)uracil with 3,4-dihydroxy-2-butanone 4-phosphate. This is the penultimate step in the biosynthesis of riboflavin. The polypeptide is 6,7-dimethyl-8-ribityllumazine synthase (RIB4) (Saccharomyces cerevisiae (strain ATCC 204508 / S288c) (Baker's yeast)).